We begin with the raw amino-acid sequence, 72 residues long: Translation initiation factor IF-1 (72 aa).

An S1-like domain is found at 1 to 72 (MSKEEVLEFS…TKGRIIYRYK (72 aa)).

This sequence belongs to the IF-1 family. In terms of assembly, component of the 30S ribosomal translation pre-initiation complex which assembles on the 30S ribosome in the order IF-2 and IF-3, IF-1 and N-formylmethionyl-tRNA(fMet); mRNA recruitment can occur at any time during PIC assembly.

The protein localises to the cytoplasm. In terms of biological role, one of the essential components for the initiation of protein synthesis. Stabilizes the binding of IF-2 and IF-3 on the 30S subunit to which N-formylmethionyl-tRNA(fMet) subsequently binds. Helps modulate mRNA selection, yielding the 30S pre-initiation complex (PIC). Upon addition of the 50S ribosomal subunit IF-1, IF-2 and IF-3 are released leaving the mature 70S translation initiation complex. This is Translation initiation factor IF-1 from Bartonella henselae (strain ATCC 49882 / DSM 28221 / CCUG 30454 / Houston 1) (Rochalimaea henselae).